A 153-amino-acid polypeptide reads, in one-letter code: D-amino acid oxidase regulator (153 aa).

Residues methionine 1 to phenylalanine 25 form an involved in targeting to the mitochondrion region. The tract at residues lysine 138–glutamate 153 is interaction with DAO.

In terms of assembly, interacts with DAO (D-amino acid oxidase); the interaction is direct, can occur in the presence or absence of FAD or substrate bound to DAO, and results in a complex containing two DAO homodimers and two DAOA monomers. Interacts with DDO (D-aspartate oxidase); the interaction is direct. Interacts wih SOD1; the interaction is direct. Interacts with MSRB2; the interaction is direct. In terms of tissue distribution, expressed in the amygdala and in astrocytes of the cortex (at protein level). Expressed in the caudate nucleus, spinal cord and testis.

It is found in the cytoplasm. The protein localises to the cytosol. Its subcellular location is the golgi apparatus. It localises to the mitochondrion. May suppress DAO (D-amino acid oxidase) and SOD1 activity and promote their degradation. Has conversely also been suggested to function as a DAO activator. May stimulate the degradation of DDO (D-aspartate oxidase). May play a role in mitochondrial fission. This Homo sapiens (Human) protein is D-amino acid oxidase regulator (DAOA).